Consider the following 449-residue polypeptide: Trigger factor (449 aa).

In terms of domain architecture, PPIase FKBP-type spans 172–257 (GDRVTVDFVG…LKQVEWAHLP (86 aa)).

It belongs to the FKBP-type PPIase family. Tig subfamily.

The protein resides in the cytoplasm. It catalyses the reaction [protein]-peptidylproline (omega=180) = [protein]-peptidylproline (omega=0). Involved in protein export. Acts as a chaperone by maintaining the newly synthesized protein in an open conformation. Functions as a peptidyl-prolyl cis-trans isomerase. This chain is Trigger factor, found in Ralstonia nicotianae (strain ATCC BAA-1114 / GMI1000) (Ralstonia solanacearum).